Consider the following 61-residue polypeptide: Potassium channel toxin alpha-KTx 6.6 (61 aa).

The N-terminal stretch at 1–23 (MNAKFILLLLVVATTMLLPDTQG) is a signal peptide. Disulfide bonds link Cys29–Cys50, Cys35–Cys55, Cys39–Cys57, and Cys45–Cys60. Residue Cys60 is modified to Cysteine amide.

It belongs to the short scorpion toxin superfamily. Potassium channel inhibitor family. Alpha-KTx 06 subfamily. As to expression, expressed by the venom gland.

The protein resides in the secreted. Blocker of voltage-gated potassium channels. This is Potassium channel toxin alpha-KTx 6.6 from Opistophthalmus carinatus (African yellow leg scorpion).